Here is a 440-residue protein sequence, read N- to C-terminus: D-serine dehydratase (440 aa).

Residue Lys-116 is modified to N6-(pyridoxal phosphate)lysine.

Belongs to the serine/threonine dehydratase family. DsdA subfamily. As to quaternary structure, monomer. Pyridoxal 5'-phosphate is required as a cofactor.

The enzyme catalyses D-serine = pyruvate + NH4(+). This chain is D-serine dehydratase, found in Salmonella arizonae (strain ATCC BAA-731 / CDC346-86 / RSK2980).